Here is a 280-residue protein sequence, read N- to C-terminus: Formyltetrahydrofolate deformylase (280 aa).

Positions 8 to 86 (VLRTICPDQK…RELNPAGRRR (79 aa)) constitute an ACT domain. The active site involves Asp-225.

Belongs to the PurU family. Homohexamer.

The enzyme catalyses (6R)-10-formyltetrahydrofolate + H2O = (6S)-5,6,7,8-tetrahydrofolate + formate + H(+). Its pathway is purine metabolism; IMP biosynthesis via de novo pathway; formate from 10-formyl-5,6,7,8-tetrahydrofolate: step 1/1. Its activity is regulated as follows. Activated by methionine, inhibited by glycine. In terms of biological role, catalyzes the hydrolysis of 10-formyltetrahydrofolate (formyl-FH4) to formate and tetrahydrofolate (FH4). Provides the major source of formate for the PurT-dependent synthesis of 5'-phosphoribosyl-N-formylglycinamide (FGAR) during aerobic growth. Has a role in regulating the one-carbon pool. In Escherichia coli (strain K12), this protein is Formyltetrahydrofolate deformylase.